The sequence spans 136 residues: Succinate dehydrogenase 2 membrane subunit SdhC (136 aa).

A run of 3 helical transmembrane segments spans residues 32 to 52 (RISG…AAML), 70 to 90 (IVGL…LNGI), and 109 to 129 (LWII…VVGI). Histidine 85 lines the heme pocket.

Belongs to the cytochrome b560 family. In terms of assembly, part of an enzyme complex containing four subunits: a flavoprotein (SdhA), an iron-sulfur protein (SdhB), plus two membrane-anchoring proteins (SdhC and SdhD). The cofactor is heme.

Its subcellular location is the cell membrane. Functionally, membrane-anchoring subunit of succinate dehydrogenase 2 (Sdh2). Sdh2 may catalyze the two-electron oxidation of succinate to fumarate with a corresponding reduction of quinone to quinol under low oxygen conditions, when the primary aerobic succinate dehydrogenase (Sdh1) is inhibited. Sdh2 seems to be the generator of the proton motive force (PMF) under hypoxia. This Mycobacterium tuberculosis (strain ATCC 25618 / H37Rv) protein is Succinate dehydrogenase 2 membrane subunit SdhC.